Here is a 117-residue protein sequence, read N- to C-terminus: NADH-ubiquinone oxidoreductase chain 3 (117 aa).

3 helical membrane-spanning segments follow: residues 1–21 (MLML…VMML), 58–78 (FLIA…LPMI), and 86–106 (LMNW…GLYH).

Belongs to the complex I subunit 3 family.

The protein resides in the mitochondrion membrane. It carries out the reaction a ubiquinone + NADH + 5 H(+)(in) = a ubiquinol + NAD(+) + 4 H(+)(out). Functionally, core subunit of the mitochondrial membrane respiratory chain NADH dehydrogenase (Complex I) that is believed to belong to the minimal assembly required for catalysis. Complex I functions in the transfer of electrons from NADH to the respiratory chain. The immediate electron acceptor for the enzyme is believed to be ubiquinone. The chain is NADH-ubiquinone oxidoreductase chain 3 (mt:ND3) from Anopheles gambiae (African malaria mosquito).